We begin with the raw amino-acid sequence, 312 residues long: HPr kinase/phosphorylase (312 aa).

Active-site residues include H139 and K160. 154–161 is an ATP binding site; sequence GRSGIGKS. S161 serves as a coordination point for Mg(2+). D178 (proton acceptor; for phosphorylation activity. Proton donor; for dephosphorylation activity) is an active-site residue. Residues 201–210 form an important for the catalytic mechanism of both phosphorylation and dephosphorylation region; sequence MEIRGLGIIN. E202 contributes to the Mg(2+) binding site. The active site involves R245. The segment at 266-271 is important for the catalytic mechanism of dephosphorylation; that stretch reads PISPGR.

Belongs to the HPrK/P family. In terms of assembly, homohexamer, arranged as bilayered trimers. It depends on Mg(2+) as a cofactor.

It carries out the reaction [HPr protein]-L-serine + ATP = [HPr protein]-O-phospho-L-serine + ADP + H(+). The enzyme catalyses [HPr protein]-O-phospho-L-serine + phosphate + H(+) = [HPr protein]-L-serine + diphosphate. With respect to regulation, contrary to HPrK/P of B.subtilis and other bacteria, that of M.pneumoniae is active as a kinase at very low ATP concentrations in the absence of fructose 1,6-bisphosphate (FBP). Kinase activity is slightly activated by FBP, and inhibited by inorganic phosphate (Pi), but FBP prevents kinase inhibition by Pi. Dephosphorylation of P-Ser-HPr by M.pneumoniae HPrK/P is strictly dependent on the presence of Pi, and is inhibited by FBP. This unique mode of control of HPrK/P activity is proposed to reflect the parasitic lifestyle of M.pneumoniae, that is strictly adapted to its ecological niche on nutrient-rich human mucous membranes. Its function is as follows. Is a metabolite-sensitive enzyme that catalyzes the ATP-as well as probably the pyrophosphate-dependent phosphorylation of Ser-47 in HPr, a phosphocarrier protein of the phosphoenolpyruvate-dependent sugar phosphotransferase system (PTS). HprK/P also catalyzes the pyrophosphate-producing, inorganic phosphate-dependent dephosphorylation (phosphorolysis) of seryl-phosphorylated HPr (P-Ser-HPr). The regulatory role of HPrK/P in the physiology of M.pneumoniae is not known yet. The chain is HPr kinase/phosphorylase (hprK) from Mycoplasma pneumoniae (strain ATCC 29342 / M129 / Subtype 1) (Mycoplasmoides pneumoniae).